The following is a 315-amino-acid chain: GTP cyclohydrolase MptA (315 aa).

It belongs to the GTP cyclohydrolase IV family. As to quaternary structure, homodimer. The cofactor is Fe(2+).

The enzyme catalyses GTP + H2O = 7,8-dihydroneopterin 2',3'-cyclic phosphate + formate + diphosphate + H(+). The protein operates within cofactor biosynthesis; 5,6,7,8-tetrahydromethanopterin biosynthesis. Its function is as follows. Converts GTP to 7,8-dihydro-D-neopterin 2',3'-cyclic phosphate, the first intermediate in the biosynthesis of coenzyme methanopterin. This is GTP cyclohydrolase MptA from Methanococcus maripaludis (strain C7 / ATCC BAA-1331).